Reading from the N-terminus, the 445-residue chain is Exodeoxyribonuclease 7 large subunit (445 aa).

The protein belongs to the XseA family. Heterooligomer composed of large and small subunits.

The protein resides in the cytoplasm. It carries out the reaction Exonucleolytic cleavage in either 5'- to 3'- or 3'- to 5'-direction to yield nucleoside 5'-phosphates.. In terms of biological role, bidirectionally degrades single-stranded DNA into large acid-insoluble oligonucleotides, which are then degraded further into small acid-soluble oligonucleotides. The chain is Exodeoxyribonuclease 7 large subunit from Shewanella pealeana (strain ATCC 700345 / ANG-SQ1).